Here is a 238-residue protein sequence, read N- to C-terminus: Ribitol-5-phosphate cytidylyltransferase 2 (238 aa).

CTP is bound by residues 7 to 10 (LAGG) and 81 to 87 (GTDRNET).

Belongs to the IspD/TarI cytidylyltransferase family. TarI subfamily.

The catalysed reaction is D-ribitol 5-phosphate + CTP + H(+) = CDP-L-ribitol + diphosphate. The protein operates within cell wall biogenesis; poly(ribitol phosphate) teichoic acid biosynthesis. In terms of biological role, catalyzes the transfer of the cytidylyl group of CTP to D-ribitol 5-phosphate. The chain is Ribitol-5-phosphate cytidylyltransferase 2 from Staphylococcus aureus (strain MRSA252).